We begin with the raw amino-acid sequence, 63 residues long: UPF0434 protein GDI0182/Gdia_2252 (63 aa).

Belongs to the UPF0434 family.

In Gluconacetobacter diazotrophicus (strain ATCC 49037 / DSM 5601 / CCUG 37298 / CIP 103539 / LMG 7603 / PAl5), this protein is UPF0434 protein GDI0182/Gdia_2252.